The sequence spans 371 residues: Cytochrome b (371 aa).

The next 4 membrane-spanning stretches (helical) occupy residues 25-45 (FGSMLLTCLILQITTGFFLAI), 69-90 (WIMQNLHAIGASMFFICIYIHI), 105-125 (WLSGTTLLITLMATAFFGYVL), and 170-190 (FFALHFILPFAIISLSSIHII). Residues His-75 and His-89 each contribute to the heme b site. Heme b-binding residues include His-174 and His-188. Residue His-193 participates in a ubiquinone binding. A run of 4 helical transmembrane segments spans residues 218-238 (YKDTLMTISLFILMFTILSFS), 280-300 (LGGTLALLMSVTILMTAPFTH), 312-332 (LAQMAFWTLIATFITITWTAS), and 339-358 (FIIISQMTSILYFLFFIMNP).

It belongs to the cytochrome b family. In terms of assembly, the cytochrome bc1 complex contains 3 respiratory subunits (MT-CYB, CYC1 and UQCRFS1), 2 core proteins (UQCRC1 and UQCRC2) and probably 6 low-molecular weight proteins. Heme b is required as a cofactor.

The protein resides in the mitochondrion inner membrane. Its function is as follows. Component of the ubiquinol-cytochrome c reductase complex (complex III or cytochrome b-c1 complex) that is part of the mitochondrial respiratory chain. The b-c1 complex mediates electron transfer from ubiquinol to cytochrome c. Contributes to the generation of a proton gradient across the mitochondrial membrane that is then used for ATP synthesis. In Sinomicrurus kelloggi (Kellogg's coral snake), this protein is Cytochrome b (MT-CYB).